A 127-amino-acid chain; its full sequence is MQDDPRYRVEVEVSPRFLAHQSTPDEGRYAFAYSIRIQNAGAVPARLIARHWQITDGNGRTEQVDGEGVVGEQPWLRPGEAFHYTSGVLLETEQGQMQGHYDMVADDGTEFIAPIAAFVLSVPRTLH.

Residues 3-127 enclose the ApaG domain; sequence DDPRYRVEVE…FVLSVPRTLH (125 aa).

This Xanthomonas euvesicatoria pv. vesicatoria (strain 85-10) (Xanthomonas campestris pv. vesicatoria) protein is Protein ApaG.